The sequence spans 999 residues: Probable beta-galactosidase C (999 aa).

Positions 1–21 (MFFFRFLTTVLLLFNAKLLVA) are cleaved as a signal peptide. N25 carries an N-linked (GlcNAc...) asparagine glycan. Substrate-binding residues include Y80, N125, E127, and N185. The active-site Proton donor is E186. N195 carries an N-linked (GlcNAc...) asparagine glycan. Y249 is a binding site for substrate. C255 and C302 are disulfide-bonded. N274 carries N-linked (GlcNAc...) asparagine glycosylation. Residue E285 is the Nucleophile of the active site. Residue Y351 participates in substrate binding. N-linked (GlcNAc...) asparagine glycans are attached at residues N389, N441, N512, N519, N600, N675, N713, N757, N808, and N897.

The protein belongs to the glycosyl hydrolase 35 family.

It is found in the secreted. It catalyses the reaction Hydrolysis of terminal non-reducing beta-D-galactose residues in beta-D-galactosides.. Its function is as follows. Cleaves beta-linked terminal galactosyl residues from gangliosides, glycoproteins, and glycosaminoglycans. The protein is Probable beta-galactosidase C (lacC) of Talaromyces marneffei (strain ATCC 18224 / CBS 334.59 / QM 7333) (Penicillium marneffei).